A 358-amino-acid polypeptide reads, in one-letter code: Phosphate acyltransferase (358 aa).

It belongs to the PlsX family. Homodimer. Probably interacts with PlsY.

It is found in the cytoplasm. It carries out the reaction a fatty acyl-[ACP] + phosphate = an acyl phosphate + holo-[ACP]. Its pathway is lipid metabolism; phospholipid metabolism. Functionally, catalyzes the reversible formation of acyl-phosphate (acyl-PO(4)) from acyl-[acyl-carrier-protein] (acyl-ACP). This enzyme utilizes acyl-ACP as fatty acyl donor, but not acyl-CoA. This chain is Phosphate acyltransferase, found in Escherichia fergusonii (strain ATCC 35469 / DSM 13698 / CCUG 18766 / IAM 14443 / JCM 21226 / LMG 7866 / NBRC 102419 / NCTC 12128 / CDC 0568-73).